Here is a 425-residue protein sequence, read N- to C-terminus: Pectate lyase L (425 aa).

Positions 1–25 (MKYLNCFISTGLAAFFLVNSTSVLA) are cleaved as a signal peptide. A disulfide bond links Cys-28 and Cys-114. Ca(2+) contacts are provided by Asp-209, Asp-233, Asp-234, and Asp-237. The active-site Proton acceptor is Lys-273. Positions 402, 413, 416, 418, and 423 each coordinate Ca(2+).

The protein belongs to the polysaccharide lyase 9 family. It depends on Ca(2+) as a cofactor.

It localises to the secreted. The catalysed reaction is Eliminative cleavage of (1-&gt;4)-alpha-D-galacturonan to give oligosaccharides with 4-deoxy-alpha-D-galact-4-enuronosyl groups at their non-reducing ends.. It functions in the pathway glycan metabolism; pectin degradation; 2-dehydro-3-deoxy-D-gluconate from pectin: step 2/5. In terms of biological role, presents an endo-cleaving activity on polygalacturonate or partially methylated pectin. Is effective in the maceration of plant tissue, and has an important role in soft-rot disease. Is 280-fold less active against polygalacturonate than the major pectate lyase PelB. When assayed on polygalacturonate, PelL releases oligogalacturonates of different sizes; upon prolonged incubation, PelL degrades the primary products to unsaturated tetramer and pentamer in addition to unsaturated dimer and trimer. When assayed on oligogalacturonates (degrees of polymerization of 2 to 8), it preferentially forms unsaturated tetramer, and displays the highest activity on the octamer. The sequence is that of Pectate lyase L (pelL) from Dickeya dadantii (strain 3937) (Erwinia chrysanthemi (strain 3937)).